We begin with the raw amino-acid sequence, 545 residues long: CTP synthase (545 aa).

The segment at 1 to 266 (MATNYIFVTG…DDFVCERFRL (266 aa)) is amidoligase domain. Residue serine 14 participates in CTP binding. Residue serine 14 participates in UTP binding. ATP is bound by residues 15-20 (SLGKGI) and aspartate 72. Aspartate 72 and glutamate 140 together coordinate Mg(2+). CTP contacts are provided by residues 147–149 (DIE), 187–192 (KTKPTQ), and lysine 223. UTP contacts are provided by residues 187-192 (KTKPTQ) and lysine 223. 239–241 (KDV) contacts ATP. The Glutamine amidotransferase type-1 domain occupies 291 to 542 (TIGMVGKYTE…VKAAYENHKK (252 aa)). Glycine 352 contacts L-glutamine. Catalysis depends on cysteine 379, which acts as the Nucleophile; for glutamine hydrolysis. L-glutamine contacts are provided by residues 380-383 (LGMQ), glutamate 403, and arginine 470. Catalysis depends on residues histidine 515 and glutamate 517.

The protein belongs to the CTP synthase family. Homotetramer.

The catalysed reaction is UTP + L-glutamine + ATP + H2O = CTP + L-glutamate + ADP + phosphate + 2 H(+). The enzyme catalyses L-glutamine + H2O = L-glutamate + NH4(+). It carries out the reaction UTP + NH4(+) + ATP = CTP + ADP + phosphate + 2 H(+). Its pathway is pyrimidine metabolism; CTP biosynthesis via de novo pathway; CTP from UDP: step 2/2. With respect to regulation, allosterically activated by GTP, when glutamine is the substrate; GTP has no effect on the reaction when ammonia is the substrate. The allosteric effector GTP functions by stabilizing the protein conformation that binds the tetrahedral intermediate(s) formed during glutamine hydrolysis. Inhibited by the product CTP, via allosteric rather than competitive inhibition. Functionally, catalyzes the ATP-dependent amination of UTP to CTP with either L-glutamine or ammonia as the source of nitrogen. Regulates intracellular CTP levels through interactions with the four ribonucleotide triphosphates. This chain is CTP synthase, found in Haemophilus influenzae (strain PittGG).